Here is a 510-residue protein sequence, read N- to C-terminus: Major facilitator superfamily domain-containing protein 4A (510 aa).

12 helical membrane-spanning segments follow: residues 19 to 39 (LTYW…GPTL), 53 to 73 (ISWV…LGGV), 82 to 102 (LWAL…IPFC), 107 to 127 (VLAS…TVAN), 139 to 159 (AFFL…SPLI), 218 to 238 (YAFW…LFLL), 303 to 323 (FFAI…MMGA), 345 to 365 (GYLP…SIPV), 380 to 400 (VGVV…IFLF), 401 to 421 (VGTA…LAYT), 434 to 454 (VLVT…GLIF), and 462 to 482 (FLVC…LLLF).

This sequence belongs to the major facilitator superfamily.

Its subcellular location is the membrane. The protein is Major facilitator superfamily domain-containing protein 4A of Mus musculus (Mouse).